The chain runs to 347 residues: MTTTRVCIDSSVALKIVRHCQESAPSIVAGQLLGLDVDGELRISHAFAFPQNAAGGNPNSDDGLSLRLKAVAKYQPEMIDHLKEVNVDSNSVGWYQSTVLGRIYNASVIENLAVFQEKNPDSVVLVYDVAGSEVVSDTDPSSTGPQGHTTTTPSGFNLRAFRLSEEYLNVRKSGKFDTATLTENNLTYHDVLVELPVEIKNSNLATLLLYQLGQQYPNSPFAESSFSNLNVSVDPFLEKNIEAIFDSVDDFHYDQGNYNYYQRQMTREQAKITQWQQKRKAENAAREKDGRPALPTDEWKRLFKLPTEPSRQDNLLISAQLNEHCSVIEEFGAAVNSKLFATQGGLL.

The region spanning 6 to 149 is the MPN domain; the sequence is VCIDSSVALK…PSSTGPQGHT (144 aa). Residues 136 to 155 are disordered; the sequence is SDTDPSSTGPQGHTTTTPSG. A compositionally biased stretch (polar residues) spans 138-155; that stretch reads TDPSSTGPQGHTTTTPSG.

The protein belongs to the eIF-3 subunit H family. In terms of assembly, component of the eukaryotic translation initiation factor 3 (eIF-3) complex.

It localises to the cytoplasm. Component of the eukaryotic translation initiation factor 3 (eIF-3) complex, which is involved in protein synthesis of a specialized repertoire of mRNAs and, together with other initiation factors, stimulates binding of mRNA and methionyl-tRNAi to the 40S ribosome. The eIF-3 complex specifically targets and initiates translation of a subset of mRNAs involved in cell proliferation. This chain is Eukaryotic translation initiation factor 3 subunit H, found in Yarrowia lipolytica (strain CLIB 122 / E 150) (Yeast).